The primary structure comprises 338 residues: DNA-directed RNA polymerase subunit alpha (338 aa).

Positions 1–234 (MIERNWNELI…DQLQIFITFE (234 aa)) are alpha N-terminal domain (alpha-NTD). An alpha C-terminal domain (alpha-CTD) region spans residues 250–338 (FNPALLKKVD…DLAKKFEDQI (89 aa)).

It belongs to the RNA polymerase alpha chain family. In terms of assembly, homodimer. The RNAP catalytic core consists of 2 alpha, 1 beta, 1 beta' and 1 omega subunit. When a sigma factor is associated with the core the holoenzyme is formed, which can initiate transcription.

It catalyses the reaction RNA(n) + a ribonucleoside 5'-triphosphate = RNA(n+1) + diphosphate. Functionally, DNA-dependent RNA polymerase catalyzes the transcription of DNA into RNA using the four ribonucleoside triphosphates as substrates. The sequence is that of DNA-directed RNA polymerase subunit alpha from Caulobacter vibrioides (strain ATCC 19089 / CIP 103742 / CB 15) (Caulobacter crescentus).